We begin with the raw amino-acid sequence, 224 residues long: MESGAYGAAKAGGSFDLRRFLTQPQVVARAVCLVFALIVFSCIYGEGYSNAHESKQMYCVFNRNEDACRYGSAIGVLAFLASAFFLVVDAYFPQISNATDRKYLVIGDLLFSALWTFLWFVGFCFLTNQWAVTNPKDVLVGADSVRAAITFSFFSIFSWGVLASLAYQRYKAGVDDFIQNYVDPTPDPNTAYASYPGASVDNYQQPPFTQNAETTEGYQPPPVY.

The residue at position 1 (methionine 1) is an N-acetylmethionine. Serine 3 is subject to Phosphoserine. In terms of domain architecture, MARVEL spans 20–171 (FLTQPQVVAR…LASLAYQRYK (152 aa)). Transmembrane regions (helical) follow at residues 26 to 46 (VVARAVCLVFALIVFSCIYGE), 73 to 93 (AIGVLAFLASAFFLVVDAYFP), 105 to 125 (VIGDLLFSALWTFLWFVGFCF), and 147 to 167 (AAITFSFFSIFSWGVLASLAY).

The protein belongs to the synaptogyrin family. In terms of assembly, (Microbial infection) Interacts with SFTS phlebovirus protein NSs; may be involved in virus replication. May be tyrosine phosphorylated by Src. Ubiquitous; low expression in brain.

It is found in the cytoplasmic vesicle membrane. The protein resides in the cytoplasmic vesicle. The protein localises to the secretory vesicle. It localises to the synaptic vesicle membrane. Its subcellular location is the lipid droplet. Its function is as follows. May play a role in regulated exocytosis. In neuronal cells, modulates the localization of synaptophysin/SYP into synaptic-like microvesicles and may therefore play a role in the formation and/or the maturation of this vesicles. May also play a role in GLUT4 storage and transport to the plasma membrane. (Microbial infection) May play a role in the assembly of cytoplasmic inclusion bodies required for SFTS phlebovirus replication. The chain is Synaptogyrin-2 from Homo sapiens (Human).